We begin with the raw amino-acid sequence, 388 residues long: Proline-rich protein 5 (388 aa).

2 interaction with RICTOR regions span residues 10–95 (MSSP…LTKG) and 188–218 (HESR…YGLH). A disordered region spans residues 12–31 (SPSLSDLGKREPAAAADERG). The segment covering 18–31 (LGKREPAAAADERG) has biased composition (basic and acidic residues). Ser-252 carries the phosphoserine modification. Residues 254–388 (SYNTPLLNPV…EGSGGRQSVV (135 aa)) are disordered. Polar residues predominate over residues 336–346 (TRSSLPRSSPE).

It belongs to the PROTOR family. Associated component of the mechanistic target of rapamycin complex 2 (mTORC2). Binds directly to MTOR and RICTOR within the TORC2 complex. In terms of tissue distribution, most abundant in kidney and liver. Also highly expressed in brain, spleen, testis and placenta. Overexpressed in several colorectal tumors.

Associated subunit of mTORC2, which regulates cell growth and survival in response to hormonal signals. mTORC2 is activated by growth factors, but, in contrast to mTORC1, seems to be nutrient-insensitive. mTORC2 seems to function upstream of Rho GTPases to regulate the actin cytoskeleton, probably by activating one or more Rho-type guanine nucleotide exchange factors. PRR5 plays an important role in regulation of PDGFRB expression and in modulation of platelet-derived growth factor signaling. May act as a tumor suppressor in breast cancer. The polypeptide is Proline-rich protein 5 (PRR5) (Homo sapiens (Human)).